Reading from the N-terminus, the 333-residue chain is 2-oxoglutarate-dependent dioxygenase ucsF (333 aa).

The region spanning 174-296 (NASELRLNHY…RYSIAYLCKA (123 aa)) is the Fe2OG dioxygenase domain. Residues His202, Asp204, and His264 each contribute to the Fe cation site. Arg287 contributes to the 2-oxoglutarate binding site.

This sequence belongs to the iron/ascorbate-dependent oxidoreductase family. Fe(2+) serves as cofactor.

The protein operates within mycotoxin biosynthesis. Functionally, 2-oxoglutarate-dependent dioxygenase; part of the gene cluster that mediates the biosynthesis of UCS1025A, a member of the pyrrolizidinone family that acts as a strong telomerase inhibitor and displays potent antibacterial and antitumor properties. These compounds share a hemiaminal-containing pyrrolizidinone core fused with a gamma-lactone, giving a furopyrrolizidine that is connected to a decalin fragment. The polyketide synthase module (PKS) of the PKS-NRPS ucsA is responsible for the synthesis of the polyketide backbone via the condensation of an acetyl-CoA starter unit with 6 malonyl-CoA units. The downstream nonribosomal peptide synthetase (NRPS) module then amidates the carboxyl end of the polyketide with a 2S,3S-methylproline derived from L-isoleucine by the 2-oxoglutarate-dependent dioxygenase ucsF which converts L-isoleucine to (4S,5S)-4-methylpyrroline-5-carboxylate that is further converted to 2S,3S-methylproline by the pyrroline-5-carboxylate reductase ucsG. Reductive release of the completed aminoacyl polyketide from the assembly line can form the 3-pyrrolin-2-one structure via an intramolecular Knoevenagel reaction. Because ucsA lacks a designated enoylreductase (ER) domain, the required activity is provided the enoyl reductase ucsL. This keto acyclic precursor is the substrate of the Diels-Alderase ucsH, that catalyzes the Diels-Alder cycloaddition. Oxidation of the 3S-methyl group to a carboxylate by the cytochrome P450 monooxygenase ucsK allows an oxa-Michael cyclization that might involve the reductase/dehydrogenase ucsI and which furnishes the furopyrrolizidine. The oxidase ucsJ likely plays a critical role in stereoselective reduction of the C5-C6 double bond to afford the required R-configured carboxylate group. Further enolization and oxidation at C5 by an unidentified enzyme affords the last intermediate that can undergo oxa-Michael cyclization to yield UCS1025A. The chain is 2-oxoglutarate-dependent dioxygenase ucsF from Acremonium sp.